A 298-amino-acid polypeptide reads, in one-letter code: Glutamyl-Q tRNA(Asp) synthetase (298 aa).

L-glutamate contacts are provided by residues 9–13 (RFAPS) and Glu-45. A 'HIGH' region motif is present at residues 12 to 22 (PSPSGELHFGS). The Zn(2+) site is built by Cys-101, Cys-103, Tyr-115, and Cys-119. Residues Tyr-172 and Arg-190 each coordinate L-glutamate. The short motif at 228–232 (KLSKQ) is the 'KMSKS' region element. Lys-231 is a binding site for ATP.

The protein belongs to the class-I aminoacyl-tRNA synthetase family. GluQ subfamily. The cofactor is Zn(2+).

Functionally, catalyzes the tRNA-independent activation of glutamate in presence of ATP and the subsequent transfer of glutamate onto a tRNA(Asp). Glutamate is transferred on the 2-amino-5-(4,5-dihydroxy-2-cyclopenten-1-yl) moiety of the queuosine in the wobble position of the QUC anticodon. The protein is Glutamyl-Q tRNA(Asp) synthetase of Salmonella typhi.